We begin with the raw amino-acid sequence, 258 residues long: Leucyl/phenylalanyl-tRNA--protein transferase (258 aa).

Residues 199 to 220 are disordered; it reads GGSDGPAPDQSIGMSSSGGVSD. Residues 209–220 are compositionally biased toward low complexity; it reads SIGMSSSGGVSD.

Belongs to the L/F-transferase family.

Its subcellular location is the cytoplasm. It carries out the reaction N-terminal L-lysyl-[protein] + L-leucyl-tRNA(Leu) = N-terminal L-leucyl-L-lysyl-[protein] + tRNA(Leu) + H(+). The enzyme catalyses N-terminal L-arginyl-[protein] + L-leucyl-tRNA(Leu) = N-terminal L-leucyl-L-arginyl-[protein] + tRNA(Leu) + H(+). The catalysed reaction is L-phenylalanyl-tRNA(Phe) + an N-terminal L-alpha-aminoacyl-[protein] = an N-terminal L-phenylalanyl-L-alpha-aminoacyl-[protein] + tRNA(Phe). In terms of biological role, functions in the N-end rule pathway of protein degradation where it conjugates Leu, Phe and, less efficiently, Met from aminoacyl-tRNAs to the N-termini of proteins containing an N-terminal arginine or lysine. The chain is Leucyl/phenylalanyl-tRNA--protein transferase from Hyphomonas neptunium (strain ATCC 15444).